The following is a 65-amino-acid chain: Large ribosomal subunit protein bL35 (65 aa).

The disordered stretch occupies residues 1-25 (MPKLKTKSSAAKRFKKTGKGGFKHR).

It belongs to the bacterial ribosomal protein bL35 family.

This chain is Large ribosomal subunit protein bL35, found in Francisella tularensis subsp. holarctica (strain FTNF002-00 / FTA).